Here is a 313-residue protein sequence, read N- to C-terminus: Ribosomal protein L11 methyltransferase (313 aa).

T154, G179, D201, and N242 together coordinate S-adenosyl-L-methionine.

This sequence belongs to the methyltransferase superfamily. PrmA family.

It is found in the cytoplasm. The enzyme catalyses L-lysyl-[protein] + 3 S-adenosyl-L-methionine = N(6),N(6),N(6)-trimethyl-L-lysyl-[protein] + 3 S-adenosyl-L-homocysteine + 3 H(+). Its function is as follows. Methylates ribosomal protein L11. This Xanthomonas oryzae pv. oryzae (strain MAFF 311018) protein is Ribosomal protein L11 methyltransferase.